The following is a 236-amino-acid chain: Cytochrome b-c1 complex subunit Rieske-4, mitochondrial (236 aa).

The transit peptide at M1–F24 directs the protein to the mitochondrion. Topologically, residues S25–R73 are mitochondrial matrix. Residues A74–L96 traverse the membrane as a helical segment. Over K97–G236 the chain is Mitochondrial intermembrane. Residues I146–L234 form the Rieske domain. [2Fe-2S] cluster is bound by residues C179, H181, C198, and H201. The cysteines at positions 184 and 200 are disulfide-linked.

The protein belongs to the Rieske iron-sulfur protein family. As to quaternary structure, component of the ubiquinol-cytochrome c oxidoreductase (cytochrome b-c1 complex, complex III, CIII), a multisubunit enzyme composed of 3 respiratory subunits cytochrome b, cytochrome c1 and Rieske protein, 2 core protein subunits, and several low-molecular weight protein subunits. The complex exists as an obligatory dimer and forms supercomplexes (SCs) in the inner mitochondrial membrane with cytochrome c oxidase (complex IV, CIV). The cofactor is [2Fe-2S] cluster.

It localises to the mitochondrion inner membrane. It carries out the reaction a quinol + 2 Fe(III)-[cytochrome c](out) = a quinone + 2 Fe(II)-[cytochrome c](out) + 2 H(+)(out). Component of the ubiquinol-cytochrome c oxidoreductase, a multisubunit transmembrane complex that is part of the mitochondrial electron transport chain which drives oxidative phosphorylation. The respiratory chain contains 3 multisubunit complexes succinate dehydrogenase (complex II, CII), ubiquinol-cytochrome c oxidoreductase (cytochrome b-c1 complex, complex III, CIII) and cytochrome c oxidase (complex IV, CIV), that cooperate to transfer electrons derived from NADH and succinate to molecular oxygen, creating an electrochemical gradient over the inner membrane that drives transmembrane transport and the ATP synthase. The cytochrome b-c1 complex catalyzes electron transfer from ubiquinol to cytochrome c, linking this redox reaction to translocation of protons across the mitochondrial inner membrane, with protons being carried across the membrane as hydrogens on the quinol. In the process called Q cycle, 2 protons are consumed from the matrix, 4 protons are released into the intermembrane space and 2 electrons are passed to cytochrome c. The Rieske protein is a catalytic core subunit containing a [2Fe-2S] iron-sulfur cluster. It cycles between 2 conformational states during catalysis to transfer electrons from the quinol bound in the Q(0) site in cytochrome b to cytochrome c1. The protein is Cytochrome b-c1 complex subunit Rieske-4, mitochondrial of Nicotiana tabacum (Common tobacco).